The primary structure comprises 578 residues: GRAM domain-containing protein 4 (578 aa).

Disordered regions lie at residues 23–58 (ESPN…AGPG) and 136–159 (TEEQ…ERRS). Phosphoserine occurs at positions 24 and 28. Over residues 44–53 (SPRDSEELRD) the composition is skewed to basic and acidic residues. Residues 83 to 143 (HLEIALLEKH…ARTEEQMAQQ (61 aa)) adopt a coiled-coil conformation. The next 3 helical transmembrane spans lie at 240–260 (VYMN…LAIL), 334–354 (ITQK…FFPY), and 356–376 (LVGL…DFIF). Residues 415-435 (QTTSSRSYVPSAPAGLGKEED) form a disordered region. Residues 445–523 (GNFHEIFNLT…VDITDIQKYK (79 aa)) form the GRAM domain.

Interacts with RTN4 (isoform B). As to expression, expressed in lung and in primary lung squamous cell carcinoma (LSCC).

It localises to the mitochondrion membrane. It is found in the endoplasmic reticulum membrane. Plays a role as a mediator of E2F1-induced apoptosis in the absence of p53/TP53. Plays a role as a mediator of E2F1-induced apoptosis in the absence of p53/TP53. Inhibits TLR9 response to nucelic acids and regulates TLR9-mediated innate immune response. The sequence is that of GRAM domain-containing protein 4 from Homo sapiens (Human).